Consider the following 69-residue polypeptide: Large ribosomal subunit protein bL31 (69 aa).

Zn(2+)-binding residues include Cys-17, Cys-19, Cys-37, and Cys-40.

The protein belongs to the bacterial ribosomal protein bL31 family. Type A subfamily. In terms of assembly, part of the 50S ribosomal subunit. Zn(2+) serves as cofactor.

In terms of biological role, binds the 23S rRNA. This is Large ribosomal subunit protein bL31 from Caldicellulosiruptor saccharolyticus (strain ATCC 43494 / DSM 8903 / Tp8T 6331).